Reading from the N-terminus, the 506-residue chain is Sporulation kinase D (506 aa).

Helical transmembrane passes span Val-17–Glu-37 and Leu-250–Tyr-270. The region spanning Ser-298–Ala-505 is the Histidine kinase domain. His-301 bears the Phosphohistidine; by autocatalysis mark.

Oligomerizes, probably forms homodimers; oligomerization is assisted by FloT. Interacts with FloT.

It is found in the cell membrane. The enzyme catalyses ATP + protein L-histidine = ADP + protein N-phospho-L-histidine.. Its function is as follows. Phosphorylates the sporulation-regulatory protein spo0F and, to a minor extent, is responsible for heterogeneous expression of spo0A during logarithmical growth. Also phosphorylates spo0A under biofilm growth conditions. The protein is Sporulation kinase D (kinD) of Bacillus subtilis (strain 168).